A 350-amino-acid chain; its full sequence is Aminomethyltransferase (350 aa).

The protein belongs to the GcvT family. As to quaternary structure, the glycine cleavage system is composed of four proteins: P, T, L and H.

It carries out the reaction N(6)-[(R)-S(8)-aminomethyldihydrolipoyl]-L-lysyl-[protein] + (6S)-5,6,7,8-tetrahydrofolate = N(6)-[(R)-dihydrolipoyl]-L-lysyl-[protein] + (6R)-5,10-methylene-5,6,7,8-tetrahydrofolate + NH4(+). In terms of biological role, the glycine cleavage system catalyzes the degradation of glycine. The polypeptide is Aminomethyltransferase (Aquifex aeolicus (strain VF5)).